A 709-amino-acid polypeptide reads, in one-letter code: MEKTFNLTRREDGIAILTMDVPGETMNTLKAEFGPEISEILSEIKRDSSIRGLVLISGKKDSFVAGADISMLDACQTAGDAKALSQQGHVVFNELEALNIPVVAAIHGACLGGGLELALACHQRVCSDDGKTMLGVPEVQLGLLPGGGGTQRLPRLVGITTALDMMLTGKQIRPKQALKMGLVNDVVPQTILLQTAVEMALAGKRTAKPVKKSLVNQLLEGTGFGRNIIFDQAAKQVAKKTQGNYPAPAKIIDCVRQGMAKGMQKGLEVEASHFAELVVSKESEALRSIFFATTEMKKETGAEGATPRKVKKAVILGGGLMGGGIASVTTTKAKIPARVKDINEKGLSNALSYAYKLLDKGVKRRHMTPAVRDNLMALMTTTTEYKGVKDADIVVEAVFEDLALKHQMVKDIERECGEHTIFASNTSSLPIGQIAQAASRPENVIGLHYFSPVEKMPLVEVIAHAKTSPETIATTVAFARKQGKTPIVVQDGAGFYVNRILALYMNEAAQLLLEGQSIEHLDKALVKFGFPVGPITLLDEVGIDVGAKIAPILETELGERFKAPAAFDKLLSDDRKGRKNGKGFYQYAAGNKASSKKKVVDESVYGVLGIKPGIDKEMSAVAERCVVQMLNEAVRCLDDGIIASPRDGDIGAIFGIGFPPFLGGPFHYIDTLGADNLVKILERYQAQYGDRFEPCPRLKEMAAEKTRFF.

The tract at residues 1 to 188 is enoyl-CoA hydratase; the sequence is MEKTFNLTRR…KMGLVNDVVP (188 aa). The segment at 308–709 is 3-hydroxyacyl-CoA dehydrogenase; it reads RKVKKAVILG…EMAAEKTRFF (402 aa).

This sequence in the N-terminal section; belongs to the enoyl-CoA hydratase/isomerase family. In the central section; belongs to the 3-hydroxyacyl-CoA dehydrogenase family. Heterotetramer of two alpha chains (FadJ) and two beta chains (FadI).

It localises to the cytoplasm. The enzyme catalyses a (3S)-3-hydroxyacyl-CoA = a (2E)-enoyl-CoA + H2O. It carries out the reaction a 4-saturated-(3S)-3-hydroxyacyl-CoA = a (3E)-enoyl-CoA + H2O. It catalyses the reaction a (3S)-3-hydroxyacyl-CoA + NAD(+) = a 3-oxoacyl-CoA + NADH + H(+). The catalysed reaction is (3S)-3-hydroxybutanoyl-CoA = (3R)-3-hydroxybutanoyl-CoA. The protein operates within lipid metabolism; fatty acid beta-oxidation. Its function is as follows. Catalyzes the formation of a hydroxyacyl-CoA by addition of water on enoyl-CoA. Also exhibits 3-hydroxyacyl-CoA epimerase and 3-hydroxyacyl-CoA dehydrogenase activities. In Shewanella sp. (strain MR-7), this protein is Fatty acid oxidation complex subunit alpha.